The sequence spans 340 residues: MITKAIVILSIITAYVDASAFLVYNYTYTLQDDNHRYDFEVTDYFNDILIKRLKLNSETGRPELRNEPPTWFNETKIRYYPKNNYNFMFWLNRMSETLDEINKLPETSNPYKTMSLTIGCTDLRQLQVNFGYVTVGGNIWTRFDPKNKRFSKVRSRTFPKVGMLTVKSQHWERVMEHLGSMVTLTCPFTADDYYKISKGYIDKPVKPTVTVTGIERGDNTTLICTFDNHYPSSVAVKWYNIEDFAPDYRYDPYVNELLPDTDYLPGEPGYPTITRRLGDKYLFTSSPRVMVPTIMSNRIACVGFHSTLEPSIYRCVNCSGPEPVLQYQGDRRNDLEDEED.

An Ig-like domain is found at 207–294 (PTVTVTGIER…SSPRVMVPTI (88 aa)).

The sequence is that of Putative Ig-like domain-containing protein C1 from Sus scrofa (Pig).